Here is a 440-residue protein sequence, read N- to C-terminus: Proline--tRNA ligase (440 aa).

This sequence belongs to the class-II aminoacyl-tRNA synthetase family. ProS type 2 subfamily. As to quaternary structure, homodimer.

The protein resides in the cytoplasm. The enzyme catalyses tRNA(Pro) + L-proline + ATP = L-prolyl-tRNA(Pro) + AMP + diphosphate. Catalyzes the attachment of proline to tRNA(Pro) in a two-step reaction: proline is first activated by ATP to form Pro-AMP and then transferred to the acceptor end of tRNA(Pro). This chain is Proline--tRNA ligase, found in Methylocella silvestris (strain DSM 15510 / CIP 108128 / LMG 27833 / NCIMB 13906 / BL2).